Reading from the N-terminus, the 447-residue chain is Pyruvate kinase (447 aa).

Position 33 (R33) interacts with substrate. Residues N35, S37, and D61 each coordinate K(+). Residue 35 to 38 (NMSH) coordinates ATP. R68 provides a ligand contact to ATP. E203 provides a ligand contact to Mg(2+). 3 residues coordinate substrate: G226, D227, and T259. Position 227 (D227) interacts with Mg(2+).

Belongs to the pyruvate kinase family. Homotetramer. The cofactor is Mg(2+). It depends on K(+) as a cofactor.

It carries out the reaction pyruvate + ATP = phosphoenolpyruvate + ADP + H(+). The protein operates within carbohydrate degradation; glycolysis; pyruvate from D-glyceraldehyde 3-phosphate: step 5/5. This chain is Pyruvate kinase, found in Methanocaldococcus jannaschii (strain ATCC 43067 / DSM 2661 / JAL-1 / JCM 10045 / NBRC 100440) (Methanococcus jannaschii).